The chain runs to 386 residues: Dual-specificity RNA methyltransferase RlmN (386 aa).

E94 (proton acceptor) is an active-site residue. The Radical SAM core domain occupies 100–341 (EENRGTLCIS…VTTIRKTRGD (242 aa)). Cysteines 107 and 347 form a disulfide. Positions 114, 118, and 121 each coordinate [4Fe-4S] cluster. Residues 173-174 (GE), S205, 227-229 (SLH), and N304 each bind S-adenosyl-L-methionine. The active-site S-methylcysteine intermediate is the C347.

It belongs to the radical SAM superfamily. RlmN family. [4Fe-4S] cluster serves as cofactor.

It localises to the cytoplasm. It carries out the reaction adenosine(2503) in 23S rRNA + 2 reduced [2Fe-2S]-[ferredoxin] + 2 S-adenosyl-L-methionine = 2-methyladenosine(2503) in 23S rRNA + 5'-deoxyadenosine + L-methionine + 2 oxidized [2Fe-2S]-[ferredoxin] + S-adenosyl-L-homocysteine. The enzyme catalyses adenosine(37) in tRNA + 2 reduced [2Fe-2S]-[ferredoxin] + 2 S-adenosyl-L-methionine = 2-methyladenosine(37) in tRNA + 5'-deoxyadenosine + L-methionine + 2 oxidized [2Fe-2S]-[ferredoxin] + S-adenosyl-L-homocysteine. Specifically methylates position 2 of adenine 2503 in 23S rRNA and position 2 of adenine 37 in tRNAs. m2A2503 modification seems to play a crucial role in the proofreading step occurring at the peptidyl transferase center and thus would serve to optimize ribosomal fidelity. The protein is Dual-specificity RNA methyltransferase RlmN of Herminiimonas arsenicoxydans.